The sequence spans 124 residues: Small ribosomal subunit protein uS11 (124 aa).

Residues 102–124 (RIGRIEDATPIPHDGTTPKRKNR) form a disordered region.

The protein belongs to the universal ribosomal protein uS11 family. In terms of assembly, part of the 30S ribosomal subunit.

In terms of biological role, located on the platform of the 30S subunit. This chain is Small ribosomal subunit protein uS11, found in Methanococcus maripaludis (strain C5 / ATCC BAA-1333).